The primary structure comprises 229 residues: 2-C-methyl-D-erythritol 4-phosphate cytidylyltransferase (229 aa).

Belongs to the IspD/TarI cytidylyltransferase family. IspD subfamily.

It carries out the reaction 2-C-methyl-D-erythritol 4-phosphate + CTP + H(+) = 4-CDP-2-C-methyl-D-erythritol + diphosphate. Its pathway is isoprenoid biosynthesis; isopentenyl diphosphate biosynthesis via DXP pathway; isopentenyl diphosphate from 1-deoxy-D-xylulose 5-phosphate: step 2/6. In terms of biological role, catalyzes the formation of 4-diphosphocytidyl-2-C-methyl-D-erythritol from CTP and 2-C-methyl-D-erythritol 4-phosphate (MEP). The protein is 2-C-methyl-D-erythritol 4-phosphate cytidylyltransferase of Neisseria meningitidis serogroup C / serotype 2a (strain ATCC 700532 / DSM 15464 / FAM18).